A 316-amino-acid polypeptide reads, in one-letter code: Acetyl-coenzyme A carboxylase carboxyl transferase subunit beta (316 aa).

The CoA carboxyltransferase N-terminal domain maps to 39-308; it reads LWHKCSKCGV…PPHMVLWETM (270 aa). Residues Cys43, Cys46, Cys62, and Cys65 each contribute to the Zn(2+) site. The segment at 43 to 65 adopts a C4-type zinc-finger fold; the sequence is CSKCGVLAYTKDLKANQMVCIEC.

It belongs to the AccD/PCCB family. In terms of assembly, acetyl-CoA carboxylase is a heterohexamer composed of biotin carboxyl carrier protein (AccB), biotin carboxylase (AccC) and two subunits each of ACCase subunit alpha (AccA) and ACCase subunit beta (AccD). Zn(2+) is required as a cofactor.

Its subcellular location is the cytoplasm. The enzyme catalyses N(6)-carboxybiotinyl-L-lysyl-[protein] + acetyl-CoA = N(6)-biotinyl-L-lysyl-[protein] + malonyl-CoA. The protein operates within lipid metabolism; malonyl-CoA biosynthesis; malonyl-CoA from acetyl-CoA: step 1/1. Component of the acetyl coenzyme A carboxylase (ACC) complex. Biotin carboxylase (BC) catalyzes the carboxylation of biotin on its carrier protein (BCCP) and then the CO(2) group is transferred by the transcarboxylase to acetyl-CoA to form malonyl-CoA. The sequence is that of Acetyl-coenzyme A carboxylase carboxyl transferase subunit beta from Nostoc punctiforme (strain ATCC 29133 / PCC 73102).